Reading from the N-terminus, the 200-residue chain is 2,3-bisphosphoglycerate-dependent phosphoglycerate mutase (200 aa).

Histidine 9 functions as the Tele-phosphohistidine intermediate in the catalytic mechanism. Residue histidine 142 is part of the active site.

Belongs to the phosphoglycerate mutase family. As to quaternary structure, homodimer.

It catalyses the reaction (2R)-2-phosphoglycerate = (2R)-3-phosphoglycerate. It functions in the pathway carbohydrate degradation; glycolysis; pyruvate from D-glyceraldehyde 3-phosphate: step 3/5. Its function is as follows. Catalyzes the interconversion of 2-phosphoglycerate and 3-phosphoglycerate. In Thermoplasma acidophilum (strain ATCC 25905 / DSM 1728 / JCM 9062 / NBRC 15155 / AMRC-C165), this protein is 2,3-bisphosphoglycerate-dependent phosphoglycerate mutase.